Reading from the N-terminus, the 638-residue chain is LIM domain kinase 2 (638 aa).

2 consecutive LIM zinc-binding domains span residues 12–63 (CQGC…CHKD) and 72–124 (CHGC…CGKC). The PDZ domain occupies 152–239 (HISMPATTEG…TLQLLIEHDP (88 aa)). Residues 280-304 (RRRSLRRSNSISKSPGPSSPKEPLL) form a disordered region. Low complexity predominate over residues 286–304 (RSNSISKSPGPSSPKEPLL). Phosphoserine occurs at positions 293 and 298. A Protein kinase domain is found at 331–608 (LIHGEVLGKG…DFFEALSLYL (278 aa)). ATP contacts are provided by residues 337–345 (LGKGFFGQA) and N360. D451 is an active-site residue. T505 carries the phosphothreonine; by ROCK1 and CDC42BP modification.

Belongs to the protein kinase superfamily. TKL Ser/Thr protein kinase family. In terms of assembly, binds ROCK1 and MARF1. Interacts with NISCH. Phosphorylated on serine and/or threonine residues by ROCK1.

It is found in the cytoplasm. It localises to the cytoskeleton. Its subcellular location is the spindle. The protein localises to the microtubule organizing center. The protein resides in the centrosome. It catalyses the reaction L-seryl-[protein] + ATP = O-phospho-L-seryl-[protein] + ADP + H(+). The enzyme catalyses L-threonyl-[protein] + ATP = O-phospho-L-threonyl-[protein] + ADP + H(+). In terms of biological role, serine/threonine-protein kinase that plays an essential role in the regulation of actin filament dynamics. Acts downstream of several Rho family GTPase signal transduction pathways. Involved in astral microtubule organization and mitotic spindle orientation during early stages of mitosis by mediating phosphorylation of TPPP. Displays serine/threonine-specific phosphorylation of myelin basic protein and histone (MBP) in vitro. Suppresses ciliogenesis via multiple pathways; phosphorylation of CFL1, suppression of directional trafficking of ciliary vesicles to the ciliary base, and by facilitating YAP1 nuclear localization where it acts as a transcriptional corepressor of the TEAD4 target genes AURKA and PLK1. The polypeptide is LIM domain kinase 2 (LIMK2) (Bos taurus (Bovine)).